The primary structure comprises 444 residues: Probable glycine dehydrogenase (decarboxylating) subunit 1 (444 aa).

This sequence belongs to the GcvP family. N-terminal subunit subfamily. The glycine cleavage system is composed of four proteins: P, T, L and H. In this organism, the P 'protein' is a heterodimer of two subunits.

The catalysed reaction is N(6)-[(R)-lipoyl]-L-lysyl-[glycine-cleavage complex H protein] + glycine + H(+) = N(6)-[(R)-S(8)-aminomethyldihydrolipoyl]-L-lysyl-[glycine-cleavage complex H protein] + CO2. Functionally, the glycine cleavage system catalyzes the degradation of glycine. The P protein binds the alpha-amino group of glycine through its pyridoxal phosphate cofactor; CO(2) is released and the remaining methylamine moiety is then transferred to the lipoamide cofactor of the H protein. In Chlorobaculum tepidum (strain ATCC 49652 / DSM 12025 / NBRC 103806 / TLS) (Chlorobium tepidum), this protein is Probable glycine dehydrogenase (decarboxylating) subunit 1.